An 886-amino-acid chain; its full sequence is DNA repair and recombination protein RAD54B (886 aa).

Residues 1–12 are compositionally biased toward polar residues; it reads MRRSAAPSQVQG. Residues 1–95 are disordered; it reads MRRSAAPSQV…ASKEITESKA (95 aa). Ser14 carries the phosphoserine modification. A compositionally biased stretch (polar residues) spans 47-62; the sequence is AEQSQNDPGVCSSNPC. 2 stretches are compositionally biased toward basic and acidic residues: residues 67-76 and 86-95; these read IPREVGDGTR and ASKEITESKA. One can recognise a Helicase ATP-binding domain in the interval 291-458; the sequence is GMRAVGKCGA…FALVDFVNPG (168 aa). ATP is bound at residue 304–311; that stretch reads DEMGLGKT. The DEGH box motif lies at 409-412; it reads DEGH. One can recognise a Helicase C-terminal domain in the interval 627–788; it reads KLLAVIHELR…HIQFSVEELK (162 aa).

The protein belongs to the SNF2/RAD54 helicase family. Interacts with RAD51 through the NH2-terminal domain.

The protein localises to the nucleus. Its function is as follows. Involved in DNA repair and mitotic recombination. May play an active role in recombination processes in concert with other members of the RAD52 epistasis group. This is DNA repair and recombination protein RAD54B (Rad54b) from Mus musculus (Mouse).